The chain runs to 273 residues: Dermonecrotic toxin LspaSicTox-alphaIA2iv (273 aa).

His5 is an active-site residue. The Mg(2+) site is built by Glu25 and Asp27. His41 functions as the Nucleophile in the catalytic mechanism. 2 cysteine pairs are disulfide-bonded: Cys45–Cys51 and Cys47–Cys190. Residue Asp85 coordinates Mg(2+).

The protein belongs to the arthropod phospholipase D family. Class II subfamily. Requires Mg(2+) as cofactor. In terms of tissue distribution, expressed by the venom gland.

It localises to the secreted. The catalysed reaction is an N-(acyl)-sphingosylphosphocholine = an N-(acyl)-sphingosyl-1,3-cyclic phosphate + choline. It catalyses the reaction an N-(acyl)-sphingosylphosphoethanolamine = an N-(acyl)-sphingosyl-1,3-cyclic phosphate + ethanolamine. The enzyme catalyses a 1-acyl-sn-glycero-3-phosphocholine = a 1-acyl-sn-glycero-2,3-cyclic phosphate + choline. It carries out the reaction a 1-acyl-sn-glycero-3-phosphoethanolamine = a 1-acyl-sn-glycero-2,3-cyclic phosphate + ethanolamine. Functionally, dermonecrotic toxins cleave the phosphodiester linkage between the phosphate and headgroup of certain phospholipids (sphingolipid and lysolipid substrates), forming an alcohol (often choline) and a cyclic phosphate. This toxin acts on sphingomyelin (SM). It may also act on ceramide phosphoethanolamine (CPE), lysophosphatidylcholine (LPC) and lysophosphatidylethanolamine (LPE), but not on lysophosphatidylserine (LPS), and lysophosphatidylglycerol (LPG). It acts by transphosphatidylation, releasing exclusively cyclic phosphate products as second products. Induces dermonecrosis, hemolysis, increased vascular permeability, edema, inflammatory response, and platelet aggregation. The sequence is that of Dermonecrotic toxin LspaSicTox-alphaIA2iv from Loxosceles spadicea (Recluse spider).